The primary structure comprises 308 residues: Glutaminase 1 (308 aa).

Substrate-binding residues include Ser-64, Asn-116, Glu-161, Asn-168, Tyr-192, Tyr-244, and Val-262.

Belongs to the glutaminase family. In terms of assembly, homotetramer.

It catalyses the reaction L-glutamine + H2O = L-glutamate + NH4(+). The protein is Glutaminase 1 of Halalkalibacterium halodurans (strain ATCC BAA-125 / DSM 18197 / FERM 7344 / JCM 9153 / C-125) (Bacillus halodurans).